Here is a 2115-residue protein sequence, read N- to C-terminus: MTTTSRVVLFGDQTVDPSPLIKQLCRHSTHSLTLQTFLQKTYFAVRQELAICEISDRANFPSFDSILALAETYSQSNESNEAVSTVLLCIAQLGLLLSREYNDNVINDSSCYSTTYLVGLCTGMLPAAALAFASSTTQLLELAPEVVRISVRLGLEASRRSAQIEKSHESWATLVPGIPLQEQRDILHRFHDVYPIPASKRAYISAESDSTTTISGPPSTLASLFSFSESLRNTRKISLPITAAFHAPHLGSSDTDKIIGSLSKGNEYHLRRDAVIISTSTGDQITGRSLGEALQQVVWDILREPLRWSTVTHAIAAKFRDQDAVLISAGPVRAANSLRREMTNAGVKIVDSYEMQPLQVSQSRNTSGDIAIVGVAGRLPGGETLEEIWENLEKGKDLHKEIPKDRFDVKTHCDPSGKIKNTTLTPYGCFLDRPGFFDARLFNMSPREAAQTDPAQRLLLLTTYEALEMSGYTPNGSPSSASDRIGTFFGQTLDDYREANASQNIDMYYVTGGIRAFGPGRLNYHFKWEGPSYCVDAACSSSALSVQMAMSSLRARECDTAVAGGTNILTGVDMFSGLSRGSFLSPTGSCKTFDDEADGYCRGEGVGSVVLKRLEDAIAEGDNIQAVIKSAATNHSAHAISITHPHAGTQQKLIRQVLREADVEADEIDYVEMHGTGTQAGDATEFTSVTKVLSDRTKDNPLHIGAVKANFGHAEAAAGTNSLIKILMMMRKNKIPPHVGIKGRINHKFPPLDKVNVSIDRALVAFKAHAKGDGKRRVLLNNFNATGGNTSLVLEDPPETVTEGEDPRTAWVVAVSAKTSNSFTQNQQRLLNYVESNPETQLQDLSYTTTARRMHHDTYRKAYAVESMDQLVRSMRKDLSSPSEPTAITGSSPSIFAFTGQGAQYLGMGRQLFETNTSFRQNILDFDRICVRQGLPSFKWLVTSSTSDESVPSPSESQLAMVSIAVALVSLWQSWGIVPSAVIGHSLGEYAALCVAGVLSVSDTLYLVGKRAEMMEKKCIANSHAMLAVQSGSELIQQIIHAEKISTCELACSNGPSNTVVSGTGKDINSLAEKLDDMGVKKTLLKLPYAFHSAQMDPILEDIRAIASNVEFLKPTVPIASTLLGSLVRDQGVITAEYLSRQTRQPVKFQEALYSLRSEGIAGDEALWIEVGAHPLCHSMVRSTLGLSPTKALPTLRRDEDCWSTISKSISNAYNSGAKFMWTEYHRDFRGALKLLELPSYAFDLKNYWIQHEGDWSLRKGEKMIASSTPTVPQQTFSTTCLQKVESETFTQDSASVAFSSRLAEPSLNTAVRGHLVNNVGLCPSSVYADVAFTAAWYIASRMAPSELVPAMDLSTMEVFRPLIVDKETSQILHVSASRKPGEQVVKVQISSQDMNGSKDHANCTVMYGDGQQWIDEWQLNAYLVQSRVDQLIQPVKPASVHRLLKEMIYRQFQTVVTYSKEYHNIDEIFMDCDLNETAANIRFQPTAGNGNFIYSPYWIDTVAHLAGFVLNASTKTPADTVFISHGWQSFRIAAPLSDEKTYRGYVRMQPIGTRGVMAGDVYIFDGDRIVVLCKGIKFQKMKRNILQSLLSTGHEETPPARPVPSKRTVQGSVTETKAAITPSIKAASGGFSNILETIASEVGIEVSEITDDGKISDLGVDSLLTISILGRLRSETGLDLPSSLFIAYPTVAQLRNFFLDKVATSQSVFDDEESEMSSSTAGSTPGSSTSHGNQNTTVTTPAEPDVVAILMSIIAREVGIDATEIQPSTPFADLGVDSLLTISILDSFKSEMRMSLAATFFHENPTFTDVQKALGVPSMPQKSLKMPSEFPEMNMGPSNQSVRSKSSILQGRPASNRPALFLLPDGAGSMFSYISLPALPSGVPVYGLDSPFHNSPKDYTVSFEEVASIFIKEIRAIQPRGPYMLGGWSLGGILAYEASRQLIAQGETITNLIMIDSPCPGTLPPLPSPTLNLLEKAGIFDGLSASSGPITERTRLHFLGSVRALENYTVKPIPADRSPGKVTVIWAQDGVLEGREDVGGEEWMADSSGGDANADMEKAKQWLTGKRTSFGPSGWDKLTGAEVQCHVVGGNHFSIMFPPKIEAVAVAMATGLPA.

The segment at 8–246 is N-terminal acylcarrier protein transacylase (SAT) domain (SAT); it reads VLFGDQTVDP…ISLPITAAFH (239 aa). Residues 367 to 796 form the Ketosynthase family 3 (KS3) domain; that stretch reads SGDIAIVGVA…GGNTSLVLED (430 aa). Catalysis depends on for beta-ketoacyl synthase activity residues C539, H674, and H713. A malonyl-CoA:ACP transacylase (MAT) domain region spans residues 895 to 1218; it reads IFAFTGQGAQ…SISNAYNSGA (324 aa). The product template (PT) domain stretch occupies residues 1279 to 1592; sequence TTCLQKVESE…KRNILQSLLS (314 aa). An N-terminal hotdog fold region spans residues 1282 to 1413; sequence LQKVESETFT…CTVMYGDGQQ (132 aa). The region spanning 1282–1588 is the PKS/mFAS DH domain; sequence LQKVESETFT…FQKMKRNILQ (307 aa). H1315 (proton acceptor; for dehydratase activity) is an active-site residue. Positions 1441–1588 are C-terminal hotdog fold; the sequence is VHRLLKEMIY…FQKMKRNILQ (148 aa). D1501 acts as the Proton donor; for dehydratase activity in catalysis. Positions 1594–1613 are disordered; that stretch reads GHEETPPARPVPSKRTVQGS. The Carrier 1 domain maps to 1626 to 1703; it reads KAASGGFSNI…QLRNFFLDKV (78 aa). O-(pantetheine 4'-phosphoryl)serine is present on S1663. The tract at residues 1710–1742 is disordered; it reads FDDEESEMSSSTAGSTPGSSTSHGNQNTTVTTP. A compositionally biased stretch (low complexity) spans 1718 to 1733; it reads SSSTAGSTPGSSTSHG. Residues 1742–1819 form the Carrier 2 domain; that stretch reads PAEPDVVAIL…DVQKALGVPS (78 aa). S1779 carries the post-translational modification O-(pantetheine 4'-phosphoryl)serine. The thioesterase (TE) domain stretch occupies residues 1861–2097; it reads LFLLPDGAGS…VVGGNHFSIM (237 aa).

Pantetheine 4'-phosphate is required as a cofactor.

The enzyme catalyses 6 malonyl-CoA + 2 acetyl-CoA + 5 H(+) = o-orsellinate depside + 6 CO2 + 8 CoA + H2O. In terms of biological role, non-reducing polyketide synthase; part of a gene cluster that mediates the biosynthesis of a yet unidentified depside/depsidone compound. The first step in the pathway is performed by the PKS PFUR17_0229 that condenses 2 acetyl-CoA starter units with 6 malonyl-CoA units to produce lecanoric acid (LA), also known as orsellinate depside. The biosynthesis occurs via the formation of 2 orsellinate intermediates fused together by the C-terminal thioesterase (TE) domain that finally releases lecanoric acid. In addition to the PKS gene, the PFUR17 gene cluster contains closely linked genes encoding a cytochrome P-450 and a laccase (phenol oxidase), directly upstream and downstream respectively, so it is likely that lecanoric acid is an intermediate in a longer biosynthetic pathway. This is Non-reducing polyketide synthase PFUR17_0229 from Pseudevernia furfuracea (Tree moss).